Here is a 224-residue protein sequence, read N- to C-terminus: Prolactin-2C3 (224 aa).

The first 29 residues, methionine 1 to serine 29, serve as a signal peptide directing secretion. A glycan (N-linked (GlcNAc...) asparagine) is linked at asparagine 19. The cysteines at positions 33 and 40 are disulfide-linked. N-linked (GlcNAc...) asparagine glycans are attached at residues asparagine 57, asparagine 75, and asparagine 88. Disulfide bonds link cysteine 87-cysteine 199 and cysteine 216-cysteine 224.

The protein belongs to the somatotropin/prolactin family. Post-translationally, N-glycosylated and sialylated. In terms of tissue distribution, expressed in placenta and hair follicles, with highest expression levels detected in the outer root sheath and no expression detected in bulb. Expressed in placenta, skin wounds, keratinocytes and weakly in embryonic fibroblasts. Expressed in brain, cerebellum and in Neuro-2a cell line. Not detected in liver, kidney, ovary, pituitary gland and brain.

The protein localises to the secreted. It localises to the endoplasmic reticulum. Functionally, may have a role in embryonic development. It is likely to provide a growth stimulus to target cells in maternal and fetal tissues during the development of the embryo at mid-gestation. May play a role during wound healing and in the hair follicle cycle as a growth factor and/or an angiogenesis factor. May play a role in microvilli formation and cell proliferation of neuroblastoma cells. This is Prolactin-2C3 (Prl2c3) from Mus musculus (Mouse).